The following is a 695-amino-acid chain: HIPL1 protein (695 aa).

A signal peptide spans 1–23; that stretch reads MKLHQFLVFLFLFLSCFALSSWA. Residues asparagine 37, asparagine 67, asparagine 107, asparagine 113, asparagine 128, asparagine 151, asparagine 175, asparagine 190, asparagine 208, asparagine 337, asparagine 429, asparagine 511, asparagine 527, asparagine 641, and asparagine 648 are each glycosylated (N-linked (GlcNAc...) asparagine). Serine 665 carries GPI-anchor amidated serine lipidation. The propeptide at 666–695 is removed in mature form; it reads SSCYKHINGFHGSLVVLFVSLSLILLGLLN.

It belongs to the PQQ oxidoreductase GdhB family. Pyrroloquinoline quinone is required as a cofactor.

The protein localises to the cell membrane. The polypeptide is HIPL1 protein (HIPL1) (Arabidopsis thaliana (Mouse-ear cress)).